The primary structure comprises 248 residues: MWLGVVTLFPEMFRAVTDFGVTGRAVNKGLLELQTWNPRDFTHDKHKTVDDRPYGGGPGMLMMVQPLRDAIHAAKAAAGDSAKVIYLSPQGRKLTQQGVEELAKSDSLILVCGRYEGVDERIIQTEVDEEWSIGDYVLSGGELPAMTLIDSVSRLVPGVLGKQASAEQDSFSDGLLDCPHYTRPETLDGLDVPAVLLSGNHEHIRRWRLQQSLGRTLLRRPELLENLALTDEQTKLLAQFVDSTNECG.

Residues G113 and 133 to 138 (IGDYVL) contribute to the S-adenosyl-L-methionine site.

This sequence belongs to the RNA methyltransferase TrmD family. Homodimer.

The protein localises to the cytoplasm. The enzyme catalyses guanosine(37) in tRNA + S-adenosyl-L-methionine = N(1)-methylguanosine(37) in tRNA + S-adenosyl-L-homocysteine + H(+). In terms of biological role, specifically methylates guanosine-37 in various tRNAs. This is tRNA (guanine-N(1)-)-methyltransferase from Shewanella woodyi (strain ATCC 51908 / MS32).